The primary structure comprises 469 residues: Acetyl-CoA decarbonylase/synthase complex subunit beta 2 (469 aa).

Residues Cys-187, Cys-190, Cys-276, and Cys-278 each contribute to the [Ni-Fe-S] cluster site.

Belongs to the CdhC family. Monomer. The ACDS complex is made up of alpha, epsilon, beta, gamma and delta chains with a probable stoichiometry of (alpha(2)epsilon(2))(4)-beta(8)-(gamma(1)delta(1))(8) (Potential). [Ni-Fe-S] cluster serves as cofactor.

It catalyses the reaction Co(I)-[corrinoid Fe-S protein] + acetyl-CoA + H(+) = methyl-Co(III)-[corrinoid Fe-S protein] + CO + CoA. Part of a complex that catalyzes the reversible cleavage of acetyl-CoA, allowing autotrophic growth from CO(2). The alpha-epsilon complex generates CO from CO(2), while the beta subunit (this protein) combines the CO with CoA and a methyl group to form acetyl-CoA. The methyl group, which is incorporated into acetyl-CoA, is transferred to the beta subunit by a corrinoid iron-sulfur protein (the gamma-delta complex). This Methanocaldococcus jannaschii (strain ATCC 43067 / DSM 2661 / JAL-1 / JCM 10045 / NBRC 100440) (Methanococcus jannaschii) protein is Acetyl-CoA decarbonylase/synthase complex subunit beta 2 (cdhC2).